Consider the following 565-residue polypeptide: Methionine--tRNA ligase (565 aa).

Residues 16 to 26 carry the 'HIGH' region motif; it reads PYAYGVPHLGN. Residues C148, C151, C161, and C164 each contribute to the Zn(2+) site. Residues 338–342 carry the 'KMSKS' region motif; it reads KFSKS. K341 serves as a coordination point for ATP.

The protein belongs to the class-I aminoacyl-tRNA synthetase family. MetG type 1 subfamily. Zn(2+) is required as a cofactor.

It is found in the cytoplasm. The enzyme catalyses tRNA(Met) + L-methionine + ATP = L-methionyl-tRNA(Met) + AMP + diphosphate. Is required not only for elongation of protein synthesis but also for the initiation of all mRNA translation through initiator tRNA(fMet) aminoacylation. The sequence is that of Methionine--tRNA ligase from Thermofilum pendens (strain DSM 2475 / Hrk 5).